Reading from the N-terminus, the 184-residue chain is ATP synthase subunit b, chloroplastic (184 aa).

A helical membrane pass occupies residues 27–49 (LATNLINLSVVLGVLIFFGKGVL).

Belongs to the ATPase B chain family. F-type ATPases have 2 components, F(1) - the catalytic core - and F(0) - the membrane proton channel. F(1) has five subunits: alpha(3), beta(3), gamma(1), delta(1), epsilon(1). F(0) has four main subunits: a(1), b(1), b'(1) and c(10-14). The alpha and beta chains form an alternating ring which encloses part of the gamma chain. F(1) is attached to F(0) by a central stalk formed by the gamma and epsilon chains, while a peripheral stalk is formed by the delta, b and b' chains.

The protein localises to the plastid. The protein resides in the chloroplast thylakoid membrane. In terms of biological role, f(1)F(0) ATP synthase produces ATP from ADP in the presence of a proton or sodium gradient. F-type ATPases consist of two structural domains, F(1) containing the extramembraneous catalytic core and F(0) containing the membrane proton channel, linked together by a central stalk and a peripheral stalk. During catalysis, ATP synthesis in the catalytic domain of F(1) is coupled via a rotary mechanism of the central stalk subunits to proton translocation. Component of the F(0) channel, it forms part of the peripheral stalk, linking F(1) to F(0). The sequence is that of ATP synthase subunit b, chloroplastic from Lactuca sativa (Garden lettuce).